A 240-amino-acid polypeptide reads, in one-letter code: Homeobox protein notochord (240 aa).

The segment covering 1-13 has biased composition (polar residues); the sequence is MSSPAPSGTQVQP. Disordered stretches follow at residues 1–21 and 208–240; these read MSSP…PCPG and QKLK…GIGS. Positions 149–208 form a DNA-binding region, homeobox; the sequence is TKRVRTTFNLQQLQELEKVFAKQHNLVGKERAQLAARLHLTENQVRIWFQNRRVKYQKQQ. The segment covering 213–225 has biased composition (low complexity); that stretch reads PSSSVMEEPSSSS.

The protein resides in the nucleus. Functionally, transcription factor that controls node morphogenesis. Acts downstream of both FOXA2 and Brachyury (T) during notochord development. Is essential for cilia formation in the posterior notochord (PNC) and for left-right patterning; acts upstream of FOXJ1 and RFX3 in this process and is required for the expression of various components important for axonemal assembly and function. Plays a role in regulating axial versus paraxial cell fate. Activates the transcription of ciliary proteins C11orf97 homolog, FAM183B and SPACA9 in the embryonic ventral node. The protein is Homeobox protein notochord (Noto) of Mus musculus (Mouse).